Reading from the N-terminus, the 116-residue chain is Large ribosomal subunit protein bL19 (116 aa).

Belongs to the bacterial ribosomal protein bL19 family.

Functionally, this protein is located at the 30S-50S ribosomal subunit interface and may play a role in the structure and function of the aminoacyl-tRNA binding site. The chain is Large ribosomal subunit protein bL19 from Mycoplasmopsis agalactiae (strain NCTC 10123 / CIP 59.7 / PG2) (Mycoplasma agalactiae).